The chain runs to 510 residues: Tryptophan 6-hydroxylase fscE (510 aa).

The chain crosses the membrane as a helical span at residues 11–31; it reads LLPIEGVIILVFVLSCFSLAI. A heme-binding site is contributed by Cys452.

Belongs to the cytochrome P450 family. Heme is required as a cofactor.

It localises to the membrane. The protein operates within secondary metabolite biosynthesis. Tryptophan 6-hydroxylase; part of the fragmented gene cluster that mediates the biosynthesis of fusarochromene, a tryptophan-derived metabolite closely related to a group of mycotoxins including fusarochromanone. Within the pathway, fscE hydroxalates the first intermediate D-tryptophan to yield 6-hydroxytryptophan. The first step of the pathway is the epimerization of L-tryptophan to D-tryptophan in the presence of the NRPS-like tryptophan epimerase fscC. D-tryptophan is subsequently hydroxylated by the tryptophan 6-hydroxylase fscE to yield 6-hydroxytryptophan. The pyrrole ring undergoes cleavaged by the tryptophan 2,3-dioxygenase fscD and is finally converted to 4-hydroxykyrunenine by the hydrolase fscH. The NRPS-like oxidoreductase fscA reduces the carboxyl group to primary alcohol and the DMATS-type prenyltransferase fscG performs prenylation, followed by the formation of a chromene ring catalyzed by the oxidoreductase fscI, which leads to desacetylfusarochromene. Epoxidation by fscF and rearrangement reactions of chromene double bonds convert compound desacetylfusarochromene to fusarochromanones. Although specific acetyltransferases were not found near the fsc gene cluster, several predicted enzymes containing the N-acetyltransferase superfamily domain are present in the genome of F.equiseti. These predicted enzymes may have the potential to convert desacetylfusarochromene to fusarochromene. The sequence is that of Tryptophan 6-hydroxylase fscE from Fusarium equiseti (Fusarium scirpi).